A 207-amino-acid chain; its full sequence is Outer-membrane lipoprotein carrier protein (207 aa).

Positions 1–21 (MRLIRMLLLPVLAVTTLSAHA) are cleaved as a signal peptide.

This sequence belongs to the LolA family. As to quaternary structure, monomer.

The protein localises to the periplasm. Its function is as follows. Participates in the translocation of lipoproteins from the inner membrane to the outer membrane. Only forms a complex with a lipoprotein if the residue after the N-terminal Cys is not an aspartate (The Asp acts as a targeting signal to indicate that the lipoprotein should stay in the inner membrane). The sequence is that of Outer-membrane lipoprotein carrier protein from Pseudomonas fluorescens (strain ATCC BAA-477 / NRRL B-23932 / Pf-5).